A 315-amino-acid chain; its full sequence is Ribosomal RNA small subunit methyltransferase H (315 aa).

S-adenosyl-L-methionine is bound by residues 32–34, Asp52, Phe78, Asp100, and Gln107; that span reads GGH.

This sequence belongs to the methyltransferase superfamily. RsmH family.

It localises to the cytoplasm. The enzyme catalyses cytidine(1402) in 16S rRNA + S-adenosyl-L-methionine = N(4)-methylcytidine(1402) in 16S rRNA + S-adenosyl-L-homocysteine + H(+). In terms of biological role, specifically methylates the N4 position of cytidine in position 1402 (C1402) of 16S rRNA. In Psychromonas ingrahamii (strain DSM 17664 / CCUG 51855 / 37), this protein is Ribosomal RNA small subunit methyltransferase H.